Here is a 131-residue protein sequence, read N- to C-terminus: Small ribosomal subunit protein uS8 (131 aa).

This sequence belongs to the universal ribosomal protein uS8 family. As to quaternary structure, part of the 30S ribosomal subunit. Contacts proteins S5 and S12.

One of the primary rRNA binding proteins, it binds directly to 16S rRNA central domain where it helps coordinate assembly of the platform of the 30S subunit. This chain is Small ribosomal subunit protein uS8, found in Desulforudis audaxviator (strain MP104C).